Here is a 151-residue protein sequence, read N- to C-terminus: UPF0178 protein PFL_5989 (151 aa).

This sequence belongs to the UPF0178 family.

The protein is UPF0178 protein PFL_5989 of Pseudomonas fluorescens (strain ATCC BAA-477 / NRRL B-23932 / Pf-5).